Consider the following 240-residue polypeptide: Probable septum site-determining protein MinC (240 aa).

It belongs to the MinC family. As to quaternary structure, interacts with MinD and FtsZ.

In terms of biological role, cell division inhibitor that blocks the formation of polar Z ring septums. Rapidly oscillates between the poles of the cell to destabilize FtsZ filaments that have formed before they mature into polar Z rings. Prevents FtsZ polymerization. This Chromobacterium violaceum (strain ATCC 12472 / DSM 30191 / JCM 1249 / CCUG 213 / NBRC 12614 / NCIMB 9131 / NCTC 9757 / MK) protein is Probable septum site-determining protein MinC.